A 71-amino-acid chain; its full sequence is Large ribosomal subunit protein uL29 (71 aa).

The protein belongs to the universal ribosomal protein uL29 family.

The polypeptide is Large ribosomal subunit protein uL29 (Rickettsia canadensis (strain McKiel)).